Consider the following 436-residue polypeptide: Trigger factor (436 aa).

Residues 162 to 247 (GDRVIIDFEG…LNNVSEPTLP (86 aa)) form the PPIase FKBP-type domain.

This sequence belongs to the FKBP-type PPIase family. Tig subfamily.

The protein localises to the cytoplasm. It catalyses the reaction [protein]-peptidylproline (omega=180) = [protein]-peptidylproline (omega=0). Functionally, involved in protein export. Acts as a chaperone by maintaining the newly synthesized protein in an open conformation. Functions as a peptidyl-prolyl cis-trans isomerase. This is Trigger factor from Neisseria gonorrhoeae (strain ATCC 700825 / FA 1090).